A 251-amino-acid chain; its full sequence is MKEVPMILEICVDDVAGLEAAVRGGADRIELCAALSGGGVTPSAGFMQRAATYGLPVSVMIRPRAGDFVFTHDEADVMKRDIDAARAAGLSGVVLGASRGDGSLDMALLEDLRRHADGMDATLHRAFDVAPDMEEALEAAISLGFPRILTSGGARSALEGVKTLARLSELAKGRIVIMPGAGVRPQSVQALLDSFPITEIHASCSAVPLYDPESRVAKLGFTGAGRKATDEAAVRELKTILSAHHKGGATL.

This sequence belongs to the CutC family.

The protein resides in the cytoplasm. This is PF03932 family protein CutC from Agrobacterium fabrum (strain C58 / ATCC 33970) (Agrobacterium tumefaciens (strain C58)).